A 467-amino-acid polypeptide reads, in one-letter code: Serine/threonine-protein phosphatase 2A 56 kDa regulatory subunit epsilon isoform (467 aa).

Positions 1-39 are disordered; it reads MSSAPTTPPSVDKVDGFSRKSVRKARQKRSQSSSQFRSQ. N-acetylserine is present on Ser2. Thr7 is subject to Phosphothreonine. Residues 20-29 are compositionally biased toward basic residues; the sequence is KSVRKARQKR. Ser30, Ser32, and Ser34 each carry phosphoserine. The segment covering 30 to 39 has biased composition (low complexity); it reads SQSSSQFRSQ.

It belongs to the phosphatase 2A regulatory subunit B56 family. In terms of assembly, PP2A consists of a common heterodimeric core enzyme, composed of a 36 kDa catalytic subunit (subunit C) and a 65 kDa constant regulatory subunit (PR65 or subunit A), that associates with a variety of regulatory subunits. Proteins that associate with the core dimer include three families of regulatory subunits B (the R2/B/PR55/B55, R3/B''/PR72/PR130/PR59 and R5/B'/B56 families), the 48 kDa variable regulatory subunit, viral proteins, and cell signaling molecules. Interacts with SGO1. Found in a complex with at least ARL2, PPP2CB; PPP2R1A, PPP2R2A, PPP2R5E and TBCD.

The protein localises to the cytoplasm. In terms of biological role, the B regulatory subunit might modulate substrate selectivity and catalytic activity, and might also direct the localization of the catalytic enzyme to a particular subcellular compartment. Interacts with cyclin G in vitro. The sequence is that of Serine/threonine-protein phosphatase 2A 56 kDa regulatory subunit epsilon isoform (Ppp2r5e) from Mus musculus (Mouse).